A 294-amino-acid chain; its full sequence is 4-hydroxybenzoate octaprenyltransferase (294 aa).

8 helical membrane passes run 24–44 (IGIL…ADGF), 47–67 (LHLI…GCVI), 99–119 (LLAA…DPLV), 139–159 (FLAI…PMGF), 164–184 (GEVP…AVAY), 213–233 (VAAV…VGIA), 238–258 (PWFF…YTLI), and 274–294 (NWVG…FPAA).

It belongs to the UbiA prenyltransferase family. Mg(2+) serves as cofactor.

Its subcellular location is the cell inner membrane. The catalysed reaction is all-trans-octaprenyl diphosphate + 4-hydroxybenzoate = 4-hydroxy-3-(all-trans-octaprenyl)benzoate + diphosphate. It participates in cofactor biosynthesis; ubiquinone biosynthesis. Its function is as follows. Catalyzes the prenylation of para-hydroxybenzoate (PHB) with an all-trans polyprenyl group. Mediates the second step in the final reaction sequence of ubiquinone-8 (UQ-8) biosynthesis, which is the condensation of the polyisoprenoid side chain with PHB, generating the first membrane-bound Q intermediate 3-octaprenyl-4-hydroxybenzoate. The protein is 4-hydroxybenzoate octaprenyltransferase of Aromatoleum aromaticum (strain DSM 19018 / LMG 30748 / EbN1) (Azoarcus sp. (strain EbN1)).